The following is a 286-amino-acid chain: Eukaryotic translation initiation factor 3 subunit J (286 aa).

Disordered regions lie at residues 1-35 (MSWD…DSWD), 141-162 (AASG…HPLF), and 229-258 (KAER…AVKT). Over residues 21–35 (WEEEGNDEPLLDSWD) the composition is skewed to acidic residues. The stretch at 35 to 75 (DIDEEEVARKKKEEEAKKKAEKEALKKKQEESKAKKLSKNK) forms a coiled coil.

It belongs to the eIF-3 subunit J family. In terms of assembly, component of the eukaryotic translation initiation factor 3 (eIF-3) complex.

It is found in the cytoplasm. Functionally, component of the eukaryotic translation initiation factor 3 (eIF-3) complex, which is involved in protein synthesis of a specialized repertoire of mRNAs and, together with other initiation factors, stimulates binding of mRNA and methionyl-tRNAi to the 40S ribosome. The eIF-3 complex specifically targets and initiates translation of a subset of mRNAs involved in cell proliferation. This Debaryomyces hansenii (strain ATCC 36239 / CBS 767 / BCRC 21394 / JCM 1990 / NBRC 0083 / IGC 2968) (Yeast) protein is Eukaryotic translation initiation factor 3 subunit J.